The chain runs to 307 residues: Transcription initiation factor IIB 2 (307 aa).

A TFIIB-type zinc finger spans residues 7-38; sequence TPKRCPECNSEHLIRDYEHGELICADCGAVIE. Zn(2+)-binding residues include Cys-11, Cys-14, Cys-30, and Cys-33. Tandem repeats lie at residues 124–207 and 218–299.

It belongs to the TFIIB family.

Stabilizes TBP binding to an archaeal box-A promoter. Also responsible for recruiting RNA polymerase II to the pre-initiation complex (DNA-TBP-TFIIB). The sequence is that of Transcription initiation factor IIB 2 from Thermoplasma acidophilum (strain ATCC 25905 / DSM 1728 / JCM 9062 / NBRC 15155 / AMRC-C165).